The chain runs to 160 residues: SKP1-like protein 1A (160 aa).

The interaction with the F-box domain of F-box proteins stretch occupies residues 102–160; the sequence is ILAANYLNIKNLLDLTCQTVADMIKGKTPEEIRTTFNIKNDFTPEEEEEVRRENQWAFE.

This sequence belongs to the SKP1 family. In terms of assembly, part of a SCF E3 ubiquitin ligase complex composed of SKP1, CUL1, RBX1 (RBX1A or RBX1B) and F-box proteins. Interacts with SKIP1, SKIP2, SKIP3, SKIP4, SKIP6, FIB1/SKIP7, SKIP8, PP2A11/SKIP10, SKIP11, PP2B11/SKIP12, PP2A14/SKIP13, SKIP14, SKIP15, SKIP16, SKIP19/FBL20, SKIP20, PP2B1/SKIP21, SKIP22, SKIP23, SKIP24, SKIP25, TULP10/SKIP26, SKIP27, SKIP28/MEE11, AFR/SKIP29, SKIP30, SKIP31, SKIP32/FBP7, SKIP33, SKIP35, ADO1/ZTL, ADO2/LKP2, ADO3/FKF1, AFR, COI1, DOR, EBF1, EBF2, EID1, ORE9, PP2A13/SKIP9, TIR1, UFO, SKP2A, CPR1/CPR30, FBL17, NUP58, At1g55000, At1g67340, At1g78100, At3g04660, At3g61590, At4g38940 and At5g49610. The SKP1A subunit of the SCF E3 ubiquitin ligase complex can interact directly with KIN10, KIN11 and the proteasome subunit PAD1. This interaction can be disrupted by PRL1. In case of polerovirus infection, part of a SCF P0 complex composed of the viral silencing suppressor P0, SKP1 and CUL1. Interacts with turnip yellows virus P0. Interacts with VBF and Agrobacterium virF. Binds to KIB1. In terms of tissue distribution, accumulates only in meristematic cells. Expressed in inflorescence, shoot and root apical meristems, as well as in developing organs such as gametocytes and seeds. Also detected in cortical layer and epidermis of roots, leaves, pith and vascular bundle of young stem, young floral buds and organ primordia, pollen and through the valve of siliques. Not detectable in mature root tissues.

It localises to the nucleus. The protein resides in the cytoplasm. The protein localises to the cytoskeleton. It is found in the spindle. Its subcellular location is the phragmoplast. The protein operates within protein modification; protein ubiquitination. Its function is as follows. Involved in ubiquitination and subsequent proteasomal degradation of target proteins. Together with CUL1, RBX1 and a F-box protein, it forms a SCF E3 ubiquitin ligase complex. The functional specificity of this complex depends on the type of F-box protein. In the SCF complex, it serves as an adapter that links the F-box protein to CUL1. SCF(UFO) is required for vegetative and floral organ development as well as for male gametogenesis. SCF(TIR1) is involved in auxin signaling pathway. SCF(COI1) regulates responses to jasmonates. SCF(EID1) and SCF(AFR) are implicated in phytochrome A light signaling. SCF(ADO1), SCF(ADO2), SCF(ADO3) are related to the circadian clock. SCF(ORE9) seems to be involved in senescence. SCF(EBF1/EBF2) may regulate ethylene signaling. Plays a role during embryogenesis and early postembryonic development, especially during cell elongation and division. Contributes to the correct chromosome segregation during tetrad formation. This chain is SKP1-like protein 1A, found in Arabidopsis thaliana (Mouse-ear cress).